The sequence spans 591 residues: PDZ and LIM domain protein 5 (591 aa).

Position 2 is an N-acetylserine (S2). Position 2 is a phosphoserine (S2). One can recognise a PDZ domain in the interval 2-85; it reads SNYSVSLVGP…SLNMTLQRAS (84 aa). The residue at position 89 (K89) is an N6-acetyllysine; alternate. K89 carries the N6-succinyllysine; alternate modification. A Glycyl lysine isopeptide (Lys-Gly) (interchain with G-Cter in SUMO2); alternate cross-link involves residue K89. E102, K105, S111, S134, and S137 each carry phosphoserine. 2 disordered regions span residues 121–166 and 186–398; these read TNMA…PTPV and SADQ…DQDT. The span at 134-143 shows a compositional bias: polar residues; that stretch reads SVSSPKVTSI. A compositionally biased stretch (low complexity) spans 144-166; the sequence is PSPSSAFTPAHAATSSHASPTPV. 2 stretches are compositionally biased toward polar residues: residues 186 to 195 and 205 to 217; these read SADQCSSPPN and RQPT…SESA. 3 positions are modified to phosphoserine: Q218, S228, and S260. 2 stretches are compositionally biased toward basic and acidic residues: residues 258–273 and 294–304; these read DASK…DWRP and HLTESENDNTK. The span at 310–339 shows a compositional bias: low complexity; sequence QEPSQQPASSGASPLSASEGPESPGSSRPS. A phosphoserine mark is found at S313, P316, and S322. Position 350 is an N6-acetyllysine (K350). The segment covering 353–385 has biased composition (polar residues); sequence GSTSVKSPSWQRPNQAAPSTGRISNNARSSGTG. Phosphoserine is present on residues S359 and S361. LIM zinc-binding domains are found at residues 413 to 472, 472 to 531, and 531 to 591; these read PMCA…FFAP, PECG…LFGT, and TICR…SVNF.

As to quaternary structure, interacts with various PKC isoforms through the LIM domains. Interacts with actin and alpha-actinin through the PDZ domain. Interacts (via LIM domains) with SIPA1L1/SPAR; this interaction may occur preferentially with isoform 1.

The protein resides in the postsynaptic density. The protein localises to the presynapse. It localises to the postsynapse. Its subcellular location is the cytoplasm. It is found in the cytosol. Its function is as follows. May play an important role in the heart development by scaffolding PKC to the Z-disk region. May play a role in the regulation of cardiomyocyte expansion. Isoforms lacking the LIM domains may negatively modulate the scaffolding activity of isoform 1. Overexpression promotes the development of heart hypertrophy. Contributes to the regulation of dendritic spine morphogenesis in neurons. May be required to restrain postsynaptic growth of excitatory synapses. Isoform 1, but not isoform 2, expression favors spine thinning and elongation. The chain is PDZ and LIM domain protein 5 from Mus musculus (Mouse).